Here is a 361-residue protein sequence, read N- to C-terminus: 4-hydroxytryptamine kinase (361 aa).

ATP-binding positions include Asn37, Lys57, and Gln118–Val120. Asp224 is a catalytic residue. Asp248–Glu250 provides a ligand contact to ATP.

The protein belongs to the methylthioribose kinase family. As to quaternary structure, monomer. Mg(2+) is required as a cofactor.

The catalysed reaction is 4-hydroxytryptamine + ATP = norbaeocystin + ADP + H(+). The enzyme catalyses psilocin + ATP = psilocybin + ADP + H(+). It carries out the reaction 4-hydroxy-N,N,N-trimethyltryptamine + ATP = aeruginascin + ADP + H(+). It participates in secondary metabolite biosynthesis. In terms of biological role, 4-hydroxytryptamine kinase; part of the gene cluster that mediates the biosynthesis of psilocybin, a psychotropic tryptamine-derived natural product. The first step in the pathway is the decarboxylation of L-tryptophan to tryptamine by the decarboxylase psiD. PsiD does not decarboxylate phenylalanine, tyrosine, or 5-hydroxy- L -tryptophan (5-HTP). 4-hydroxy-L-tryptophan is accepted as substrate by psiD as well. The cytochrome P450 monooxygenase psiH then converts tryptamine to 4-hydroxytryptamine. The kinase psiK catalyzes the 4-O-phosphorylation step by converting 4-hydroxytryptamine into norbaeocystin. The methyltransferase psiM then catalyzes iterative methyl transfer to the amino group of norbaeocystin to yield psilocybin via a monomethylated intermediate, baeocystin. 4-hydroxy-6-methyl-l-tryptophancan also be converted the decarboxylase PsiD, kinase PsiK, and methyltransferase PsiM into respectively 6-methyl-norbaeocystin, 6-methylbaeocystin, and 6-methylpsilocybin. PsiK kinase can also turn psilocin into psilocybin. This activity may represent a protective mechanism to rephosphorylate the unstable psilocin to the stable psilocybin in case of intracellular ester cleavage. Moreover, psiK is able to O-phosphorylate the quaternary amine 4-hydroxy-N,N,N-trimethyltryptamine (4-OH-TMT) to yield aeruginascin, another bioactive compound found in Psilocybe species. In Psilocybe cyanescens, this protein is 4-hydroxytryptamine kinase.